The sequence spans 353 residues: MTAIRPGSVTFENVTKKFGNFTALPNLSLTVEPGTLVTLLGPSGCGKTTTLRLLAGLEHPTSGRILIGGKDVTNLPANERDVSMVFQSYALFPHMTSLENVAYGLESSGFKKNEARERAEEGLKLVGLGGMGHRLPAELSGGQQQRVAVARALVLEPQVLLLDEPLSTLDARLRRRVRTEIRELQQRLGFTAVYVTHDQDEALAVSDTIIVMKEGGIAQKGSPRDLYEAPASAFIADFMGEANVVPCEVISAENGEAVIRVAGLTHRVPARNAQPGPAQLAIRPNAVTLQPQAGGGFSGTVAHSAYLGDHIEYEIETEHGKLFIVDPAVEQSLPLQTDVSIQFKTRGLAIINQ.

An ABC transporter domain is found at 9–239 (VTFENVTKKF…PASAFIADFM (231 aa)). Residue 41 to 48 (GPSGCGKT) coordinates ATP.

Belongs to the ABC transporter superfamily. Fe(3+) ion importer (TC 3.A.1.10) family. As to quaternary structure, the complex is composed of two ATP-binding proteins (FbpC), two transmembrane proteins (FbpB) and a solute-binding protein (FbpA).

It localises to the cell inner membrane. The catalysed reaction is Fe(3+)(out) + ATP + H2O = Fe(3+)(in) + ADP + phosphate + H(+). In terms of biological role, part of the ABC transporter complex FbpABC involved in Fe(3+) ions import. Responsible for energy coupling to the transport system. This Brucella abortus (strain 2308) protein is Fe(3+) ions import ATP-binding protein FbpC.